The sequence spans 470 residues: Alpha-1A adrenergic receptor (470 aa).

Over Met-1 to Val-27 the chain is Extracellular. Residues Asn-9 and Asn-12 are each glycosylated (N-linked (GlcNAc...) asparagine). A helical membrane pass occupies residues Val-28–Val-51. Over Val-52–Phe-64 the chain is Cytoplasmic. A helical transmembrane segment spans residues Ile-65–Ile-88. Residues Leu-89–Cys-99 lie on the Extracellular side of the membrane. Cys-99 and Cys-176 are oxidised to a cystine. The helical transmembrane segment at Asn-100–Val-122 threads the bilayer. The Cytoplasmic segment spans residues Asp-123–Ala-143. The helical transmembrane segment at Leu-144–Glu-167 threads the bilayer. The Extracellular portion of the chain corresponds to Pro-168–Glu-181. A helical membrane pass occupies residues Pro-182–Cys-205. Over Arg-206–Thr-271 the chain is Cytoplasmic. The helical transmembrane segment at Leu-272–Ile-295 threads the bilayer. Residues Phe-296–Asp-303 are Extracellular-facing. The helical transmembrane segment at Thr-304–Ser-327 threads the bilayer. Residues Asn-328 to Val-470 lie on the Cytoplasmic side of the membrane. The S-palmitoyl cysteine moiety is linked to residue Cys-343. The disordered stretch occupies residues Gly-375–Glu-416. The segment covering Ser-381–Pro-392 has biased composition (polar residues).

It belongs to the G-protein coupled receptor 1 family. Adrenergic receptor subfamily. ADRA1A sub-subfamily.

It is found in the cell membrane. Its function is as follows. This alpha-adrenergic receptor mediates its action by association with G proteins that activate a phosphatidylinositol-calcium second messenger system. In Oryzias latipes (Japanese rice fish), this protein is Alpha-1A adrenergic receptor (adra1a).